We begin with the raw amino-acid sequence, 387 residues long: WD repeat-containing protein 89 (387 aa).

WD repeat units lie at residues 21 to 65 (KEPT…VLRE), 68 to 107 (GYPGLLNGVRFANSCDSVYSACTDGTVKCWDARVAREKPV), 112 to 156 (GYPS…QDLS), 168 to 208 (THSD…EEDA), 214 to 254 (NSIS…TDEP), and 319 to 358 (GHAATVRSFCWNVQDDSLLTGGEDAQLLLWKPGAIEKTFT).

The sequence is that of WD repeat-containing protein 89 (WDR89) from Pongo abelii (Sumatran orangutan).